Here is a 232-residue protein sequence, read N- to C-terminus: Vesicle transport through interaction with t-SNAREs homolog 1B (232 aa).

An N-acetylalanine modification is found at A2. 2 interaction with CLINT1 regions span residues 2 to 23 (AASA…GLLE) and 69 to 73 (APLTF). The Cytoplasmic segment spans residues 2–208 (AASAASSEHF…SRKVITNKLL (207 aa)). A coiled-coil region spans residues 36-98 (AGTEEKKKLV…AKLHREVRST (63 aa)). R107 is subject to Omega-N-methylarginine. S138 bears the Phosphoserine mark. Residues 160 to 201 (GTEIIEELGEQRDQLERTKSRLVNTNENLSKSRKILRSMSRK) adopt a coiled-coil conformation. Residues 209-229 (LSVIILLELAILVGLVYYKFF) traverse the membrane as a helical; Anchor for type IV membrane protein segment. Residues 230 to 232 (RHH) are Vesicular-facing.

It belongs to the VTI1 family. Forms a SNARE complex with STX7, STX8 and VAMP8 which functions in the homotypic fusion of late endosomes. Component of the SNARE complex composed of STX7, STX8, VAMP7 and VIT1B that is required for heterotypic fusion of late endosomes with lysosomes. May interact with STX17. Interacts with CLINT1. As to expression, broadly expressed.

The protein resides in the early endosome membrane. It localises to the late endosome membrane. Its subcellular location is the lysosome membrane. It is found in the cytoplasmic granule. The protein localises to the recycling endosome membrane. In terms of biological role, V-SNARE that mediates vesicle transport pathways through interactions with t-SNAREs on the target membrane. These interactions are proposed to mediate aspects of the specificity of vesicle trafficking and to promote fusion of the lipid bilayers. This Mus musculus (Mouse) protein is Vesicle transport through interaction with t-SNAREs homolog 1B (Vti1b).